A 184-amino-acid chain; its full sequence is Protein Syd (184 aa).

It belongs to the Syd family.

It is found in the cell inner membrane. In terms of biological role, interacts with the SecY protein in vivo. May bind preferentially to an uncomplexed state of SecY, thus functioning either as a chelating agent for excess SecY in the cell or as a regulatory factor that negatively controls the translocase function. This chain is Protein Syd, found in Photobacterium profundum (strain SS9).